Consider the following 390-residue polypeptide: Chorismate synthase 1 (390 aa).

NADP(+) is bound by residues arginine 39 and arginine 45. Residues 95–117 (EQEEKEMKRKVTKPRPGHADLNG) are disordered. FMN contacts are provided by residues 132 to 134 (RSS), 253 to 254 (NA), glycine 298, 313 to 317 (KPIPT), and arginine 339.

It belongs to the chorismate synthase family. Homotetramer. FMNH2 serves as cofactor.

The enzyme catalyses 5-O-(1-carboxyvinyl)-3-phosphoshikimate = chorismate + phosphate. It participates in metabolic intermediate biosynthesis; chorismate biosynthesis; chorismate from D-erythrose 4-phosphate and phosphoenolpyruvate: step 7/7. In terms of biological role, catalyzes the anti-1,4-elimination of the C-3 phosphate and the C-6 proR hydrogen from 5-enolpyruvylshikimate-3-phosphate (EPSP) to yield chorismate, which is the branch point compound that serves as the starting substrate for the three terminal pathways of aromatic amino acid biosynthesis. This reaction introduces a second double bond into the aromatic ring system. The chain is Chorismate synthase 1 from Bacillus cereus (strain ATCC 14579 / DSM 31 / CCUG 7414 / JCM 2152 / NBRC 15305 / NCIMB 9373 / NCTC 2599 / NRRL B-3711).